A 1296-amino-acid polypeptide reads, in one-letter code: Probable serine/threonine protein kinase IREH1 (1296 aa).

Disordered stretches follow at residues Met1 to Pro274, Ser457 to His480, and Ser524 to Arg553. The span at Ser10 to Ser32 shows a compositional bias: low complexity. A Phosphoserine modification is found at Ser32. Composition is skewed to basic and acidic residues over residues Asp68–Ser77, Glu101–Glu112, and Arg178–Leu208. A compositionally biased stretch (low complexity) spans Pro214–Gly249. The C2H2-type; atypical zinc finger occupies Cys602–Cys621. Residues Phe724–Arg750 form a disordered region. Over residues Gln730–Met740 the composition is skewed to polar residues. One can recognise a Protein kinase domain in the interval Phe882–Phe1171. ATP is bound by residues Ile888 to Val896 and Lys911. The Proton acceptor role is filled by Asp1005. Ser1070 is modified (phosphoserine). Residues Lys1172–Asn1277 enclose the AGC-kinase C-terminal domain. Positions Pro1214–Glu1245 are disordered. The segment covering Asp1225–Ser1235 has biased composition (polar residues). Positions Asn1236–Glu1245 are enriched in basic and acidic residues.

This sequence belongs to the protein kinase superfamily. AGC Ser/Thr protein kinase family.

It carries out the reaction L-seryl-[protein] + ATP = O-phospho-L-seryl-[protein] + ADP + H(+). It catalyses the reaction L-threonyl-[protein] + ATP = O-phospho-L-threonyl-[protein] + ADP + H(+). In terms of biological role, may be involved in root hair elongation. The sequence is that of Probable serine/threonine protein kinase IREH1 from Arabidopsis thaliana (Mouse-ear cress).